Reading from the N-terminus, the 192-residue chain is Superoxide dismutase [Fe] (192 aa).

Residues histidine 27, histidine 74, aspartate 157, and histidine 161 each coordinate Fe cation.

This sequence belongs to the iron/manganese superoxide dismutase family. In terms of assembly, homodimer. Fe cation serves as cofactor.

The enzyme catalyses 2 superoxide + 2 H(+) = H2O2 + O2. Functionally, destroys superoxide anion radicals which are normally produced within the cells and which are toxic to biological systems. This chain is Superoxide dismutase [Fe] (sodB), found in Legionella pneumophila subsp. pneumophila (strain Philadelphia 1 / ATCC 33152 / DSM 7513).